A 61-amino-acid polypeptide reads, in one-letter code: Protein MATERNALLY EXPRESSED GENE 6 (61 aa).

Residues Cys38 and Cys60 are joined by a disulfide bond.

This sequence belongs to the MEG family. As to expression, ubiquitous.

The polypeptide is Protein MATERNALLY EXPRESSED GENE 6 (MEG6) (Zea mays (Maize)).